We begin with the raw amino-acid sequence, 567 residues long: Urease subunit alpha (567 aa).

One can recognise a Urease domain in the interval 129–567 (GGIDSHIHFI…LPLAQRYFLF (439 aa)). Residues H134, H136, and K217 each contribute to the Ni(2+) site. At K217 the chain carries N6-carboxylysine. Position 219 (H219) interacts with substrate. Ni(2+) is bound by residues H246 and H272. H320 (proton donor) is an active-site residue. D360 contacts Ni(2+).

This sequence belongs to the metallo-dependent hydrolases superfamily. Urease alpha subunit family. As to quaternary structure, heterotrimer of UreA (gamma), UreB (beta) and UreC (alpha) subunits. Three heterotrimers associate to form the active enzyme. Ni cation is required as a cofactor. Post-translationally, carboxylation allows a single lysine to coordinate two nickel ions.

It is found in the cytoplasm. It catalyses the reaction urea + 2 H2O + H(+) = hydrogencarbonate + 2 NH4(+). The protein operates within nitrogen metabolism; urea degradation; CO(2) and NH(3) from urea (urease route): step 1/1. The polypeptide is Urease subunit alpha (Pseudomonas putida (strain W619)).